A 310-amino-acid chain; its full sequence is Aspartate carbamoyltransferase catalytic subunit (310 aa).

Residues R58 and T59 each coordinate carbamoyl phosphate. Residue K86 participates in L-aspartate binding. 3 residues coordinate carbamoyl phosphate: R108, H136, and Q139. Residues R169 and R224 each contribute to the L-aspartate site. Carbamoyl phosphate contacts are provided by G265 and P266.

The protein belongs to the aspartate/ornithine carbamoyltransferase superfamily. ATCase family. As to quaternary structure, heterododecamer (2C3:3R2) of six catalytic PyrB chains organized as two trimers (C3), and six regulatory PyrI chains organized as three dimers (R2).

The catalysed reaction is carbamoyl phosphate + L-aspartate = N-carbamoyl-L-aspartate + phosphate + H(+). It functions in the pathway pyrimidine metabolism; UMP biosynthesis via de novo pathway; (S)-dihydroorotate from bicarbonate: step 2/3. Its function is as follows. Catalyzes the condensation of carbamoyl phosphate and aspartate to form carbamoyl aspartate and inorganic phosphate, the committed step in the de novo pyrimidine nucleotide biosynthesis pathway. The polypeptide is Aspartate carbamoyltransferase catalytic subunit (Trichlorobacter lovleyi (strain ATCC BAA-1151 / DSM 17278 / SZ) (Geobacter lovleyi)).